Reading from the N-terminus, the 273-residue chain is Nickel import ATP-binding protein NikE (273 aa).

Residues 13 to 252 (YRTGGLLRKR…AHPVGRQLQA (240 aa)) form the ABC transporter domain. 45–52 (GSSGSGKS) lines the ATP pocket.

The protein belongs to the ABC transporter superfamily. Nickel importer (TC 3.A.1.5.3) family. As to quaternary structure, the complex is composed of two ATP-binding proteins (NikD and NikE), two transmembrane proteins (NikB and NikC) and a solute-binding protein (NikA).

It is found in the cell inner membrane. The catalysed reaction is Ni(2+)(out) + ATP + H2O = Ni(2+)(in) + ADP + phosphate + H(+). In terms of biological role, part of the ABC transporter complex NikABCDE involved in nickel import. Responsible for energy coupling to the transport system. This Pseudomonas putida (strain ATCC 47054 / DSM 6125 / CFBP 8728 / NCIMB 11950 / KT2440) protein is Nickel import ATP-binding protein NikE.